A 303-amino-acid polypeptide reads, in one-letter code: Protein translocase subunit SecF (303 aa).

A run of 6 helical transmembrane segments spans residues 28–48 (SIIL…NFGI), 140–160 (IEAG…YIWV), 164–184 (WYFG…ALGF), 194–214 (LSTI…SVVI), 246–266 (ILTV…GGEA), and 272–292 (VLVF…SAPI).

This sequence belongs to the SecD/SecF family. SecF subfamily. Forms a complex with SecD. Part of the essential Sec protein translocation apparatus which comprises SecA, SecYEG and auxiliary proteins SecDF-YajC and YidC.

Its subcellular location is the cell inner membrane. In terms of biological role, part of the Sec protein translocase complex. Interacts with the SecYEG preprotein conducting channel. SecDF uses the proton motive force (PMF) to complete protein translocation after the ATP-dependent function of SecA. The chain is Protein translocase subunit SecF from Rickettsia bellii (strain OSU 85-389).